Reading from the N-terminus, the 268-residue chain is MAVGKNKGLAKSGKKGLKKKIVDPFTRKDWYDVKAPSLFTNRDIGKTLVNRTAGTKIASDSLKGRVFEVSLADLQGESEAERSFRKFRLIAEEVQGRYLLTNFHGMDFTTDKLRSLVKKWQTLIECSVDVKTTDSYLLRVFCIGFTQKDQRSQRKTCYAQHTQVRAIRKKMTEIITKEISSGDLKEAVSKLIPDSIAKDIEKSCHSIYPIHEVYIRKVKVLKKPKFDMGKLLDMHGEGAVTKRVTTEDGTGVVISRPEGYEPPIQESV.

Belongs to the eukaryotic ribosomal protein eS1 family. As to quaternary structure, component of the small ribosomal subunit. Mature ribosomes consist of a small (40S) and a large (60S) subunit. The 40S subunit contains about 33 different proteins and 1 molecule of RNA (18S). The 60S subunit contains about 49 different proteins and 3 molecules of RNA (28S, 5.8S and 5S).

Its subcellular location is the cytoplasm. In Artemia franciscana (Brine shrimp), this protein is Small ribosomal subunit protein eS1.